Here is a 465-residue protein sequence, read N- to C-terminus: ILERGDALLVVQWNIRAFTGVKKWPWMELYFEIEPLLKSAEAEKEMAAMKEEFGRIKESLEKSEARRKELEEKMVSLLQEKNDLQLQVQAEQDNLNDAEERCDQLIKNKIQLEAKVKEMNERLEDEEEMNAELTAKKRKLEDECSELKKDIDDLELTLAKVEKEKHATENKVKNLTEEMAGLDEIIAKLTKEKKALQEAHQQALDDLQAEEDKVNTLTKAKLKLEQQVDDLEGSLEQEKKVRMDLERAKRKLEGDLKLTQESIMDLENDKQQLEERLKKKEFDISQLNSKIEDEQALVLQLQKKLKENQARIEELEEELEAERTARAKVEKLRSDLSRELEEISERLEEAGGATSVQIEMNKKREAEFQKMRRDLEEATLQHEATASALRRKHADSVAELGEQIDNLQRVKQKLEKEKSEFKLELDDVTSNMEQIIKAKANLEKVSRTLEDQANEYRRKLEEAQR.

The 35-residue stretch at 1 to 35 folds into the Myosin motor domain; it reads ILERGDALLVVQWNIRAFTGVKKWPWMELYFEIEP. Residues 36-465 adopt a coiled-coil conformation; the sequence is LLKSAEAEKE…YRRKLEEAQR (430 aa). Phosphoserine is present on residues Ser285 and Ser334. Position 456 is a phosphotyrosine (Tyr456).

In terms of assembly, muscle myosin is a hexameric protein that consists of 2 heavy chain subunits (MHC), 2 alkali light chain subunits (MLC) and 2 regulatory light chain subunits (MLC-2).

It is found in the cytoplasm. The protein localises to the myofibril. Muscle contraction. This is Myosin-6 (MYH6) from Oryctolagus cuniculus (Rabbit).